The primary structure comprises 647 residues: MPNEFISQSLSTLTNTPLNIQKKLLPITKYRNQLLYAVEQNQITIVLGHTGCGKTTQIPQFLYEAGWASQNGIIGCTQPRRLVAKSVSERVSLELNSPPGSLCGYSIQFDHNVSEKTKIKYMTDGILLNEIFFDPLLERYSIVILDEVHERTLSTDLLLGVLKRILEKRNDFRLVLSSASVDANKLSQFFGQDKVCTMSIEGKLFPVETLFLQKPTENYVDSAIETVININSTYPPGDILVFLSGRKEIEYCIKKIEDSLIHASEDCQTLVPLPLHAGLTVDEQMRVFNIYDGDFRKVIFSTNIAETSITIDGIVYVVDSGFNKQRIYNPYTRTSKLINVPISKSSAIQRSGRAGRTMRGKVFRLYTEKAYSLMKEEFEADILNCDMSPLVLFLKGLGLKNILQFPFFVRPPTVHLMAALEDLYLLGVLDESGNLTDPLGIQISNSFLDANISKALLTSNQFGCTHEILSIASILTAGEVFYNPTSSSKNDAFVAHSSFFANEGDIITALNVFESFVGNKKDLQWCRKNYLNYQTLRQALDIRTHLVRFLNKFSIPTAQRLPSSDCSKILKCLLDGFVRNVAHLQNDGSYKTIGGKQVWLDSSSVLHEKKTPWIMYSSAVESETQIFVKNISKIESFWLDKYYKREK.

Residues 35–199 enclose the Helicase ATP-binding domain; it reads LYAVEQNQIT…FGQDKVCTMS (165 aa). 48–55 provides a ligand contact to ATP; the sequence is GHTGCGKT. A DEAH box motif is present at residues 146–149; the sequence is DEVH. The region spanning 219-398 is the Helicase C-terminal domain; sequence YVDSAIETVI…PLVLFLKGLG (180 aa).

It belongs to the DEAD box helicase family. DEAH subfamily.

It is found in the nucleus. It catalyses the reaction ATP + H2O = ADP + phosphate + H(+). Its function is as follows. Pre-mRNA processing factor involved in disassembly of spliceosomes after the release of mature mRNA. The polypeptide is Putative pre-mRNA-splicing factor ATP-dependent RNA helicase C20H4.09 (Schizosaccharomyces pombe (strain 972 / ATCC 24843) (Fission yeast)).